The primary structure comprises 476 residues: tRNA(Ile)-lysidine synthase (476 aa).

30 to 35 is a binding site for ATP; the sequence is SGGPDS.

It belongs to the tRNA(Ile)-lysidine synthase family.

The protein resides in the cytoplasm. The catalysed reaction is cytidine(34) in tRNA(Ile2) + L-lysine + ATP = lysidine(34) in tRNA(Ile2) + AMP + diphosphate + H(+). Functionally, ligates lysine onto the cytidine present at position 34 of the AUA codon-specific tRNA(Ile) that contains the anticodon CAU, in an ATP-dependent manner. Cytidine is converted to lysidine, thus changing the amino acid specificity of the tRNA from methionine to isoleucine. The polypeptide is tRNA(Ile)-lysidine synthase (Bacillus cereus (strain ATCC 10987 / NRS 248)).